Consider the following 136-residue polypeptide: MAKKSSSRLPKRKGEYTYRGKTVSELQELSLEEFAELLPSRERRSLKRGFTDGQKKVLHEFKEGKKIRTHHRDMIILPEMIGKTIEIHNGKGFVSVDLQPEMVGHRFGEFAPTRSRVSHGSAGVGATRSSKFVPLK.

The segment at 114-136 (RSRVSHGSAGVGATRSSKFVPLK) is disordered.

The protein belongs to the universal ribosomal protein uS19 family.

In terms of biological role, protein S19 forms a complex with S13 that binds strongly to the 16S ribosomal RNA. The sequence is that of Small ribosomal subunit protein uS19 from Methanosarcina acetivorans (strain ATCC 35395 / DSM 2834 / JCM 12185 / C2A).